The chain runs to 333 residues: tRNA dimethylallyltransferase (333 aa).

Position 16-23 (16-23 (GPTASGKT)) interacts with ATP. 18–23 (TASGKT) contributes to the substrate binding site. 3 interaction with substrate tRNA regions span residues 41-44 (DSAL), 165-169 (QRISR), and 253-258 (RCVGYR).

This sequence belongs to the IPP transferase family. In terms of assembly, monomer. Mg(2+) is required as a cofactor.

It catalyses the reaction adenosine(37) in tRNA + dimethylallyl diphosphate = N(6)-dimethylallyladenosine(37) in tRNA + diphosphate. Its function is as follows. Catalyzes the transfer of a dimethylallyl group onto the adenine at position 37 in tRNAs that read codons beginning with uridine, leading to the formation of N6-(dimethylallyl)adenosine (i(6)A). This chain is tRNA dimethylallyltransferase, found in Polaromonas sp. (strain JS666 / ATCC BAA-500).